Reading from the N-terminus, the 369-residue chain is Biglycan (369 aa).

The N-terminal stretch at 1 to 16 is a signal peptide; it reads MWPLWPLAALLALSQA. The propeptide occupies 17 to 37; the sequence is LPFEQKAFWDFTLDDGLPMLN. Residues Ser-42 and Ser-48 are each glycosylated (O-linked (Xyl...) (glycosaminoglycan) serine). Disulfide bonds link Cys-64–Cys-70 and Cys-68–Cys-77. LRR repeat units follow at residues 83–103, 104–127, 128–151, 152–172, 173–196, 197–221, 222–242, 243–266, 267–290, 291–313, 314–343, and 344–369; these read KAVP…NNDI, SELR…NNKI, SKIH…KNHL, VEIP…DNRI, RKVP…GNPL, ENSG…EAKL, TGIP…HNKI, QAIE…HNQI, RMIE…NNKL, SRVP…TNNI, TKVG…NNPV, and PYWE…NYKK. Residues Ser-181 and Ser-199 are each glycosylated (O-linked (Xyl...) (glycosaminoglycan) serine). N-linked (GlcNAc...) asparagine glycans are attached at residues Asn-271 and Asn-312. Cys-322 and Cys-355 are disulfide-bonded.

This sequence belongs to the small leucine-rich proteoglycan (SLRP) family. SLRP class I subfamily. As to quaternary structure, homodimer. Forms a ternary complex with MFAP2 and ELN. In terms of processing, the two attached glycosaminoglycan chains can be either chondroitin sulfate or dermatan sulfate. Found in several connective tissues, especially in articular cartilages.

It is found in the secreted. The protein localises to the extracellular space. The protein resides in the extracellular matrix. In terms of biological role, may be involved in collagen fiber assembly. The chain is Biglycan (BGN) from Bos taurus (Bovine).